A 397-amino-acid chain; its full sequence is Endoglucanase (397 aa).

E194 (proton donor) is an active-site residue. The Nucleophile role is filled by E317.

This sequence belongs to the glycosyl hydrolase 5 (cellulase A) family.

The enzyme catalyses Endohydrolysis of (1-&gt;4)-beta-D-glucosidic linkages in cellulose, lichenin and cereal beta-D-glucans.. The protein is Endoglucanase of Paenibacillus polymyxa (Bacillus polymyxa).